The chain runs to 568 residues: Proline--tRNA ligase (568 aa).

This sequence belongs to the class-II aminoacyl-tRNA synthetase family. ProS type 1 subfamily. In terms of assembly, homodimer.

It localises to the cytoplasm. It catalyses the reaction tRNA(Pro) + L-proline + ATP = L-prolyl-tRNA(Pro) + AMP + diphosphate. Its function is as follows. Catalyzes the attachment of proline to tRNA(Pro) in a two-step reaction: proline is first activated by ATP to form Pro-AMP and then transferred to the acceptor end of tRNA(Pro). As ProRS can inadvertently accommodate and process non-cognate amino acids such as alanine and cysteine, to avoid such errors it has two additional distinct editing activities against alanine. One activity is designated as 'pretransfer' editing and involves the tRNA(Pro)-independent hydrolysis of activated Ala-AMP. The other activity is designated 'posttransfer' editing and involves deacylation of mischarged Ala-tRNA(Pro). The misacylated Cys-tRNA(Pro) is not edited by ProRS. The polypeptide is Proline--tRNA ligase (Listeria monocytogenes serotype 4b (strain F2365)).